A 1165-amino-acid chain; its full sequence is ATP-dependent helicase/deoxyribonuclease subunit B (1165 aa).

The region spanning 1-298 (MALRFILGRA…AHLEREFFRR (298 aa)) is the UvrD-like helicase ATP-binding domain. 8 to 15 (GRAGTGKT) is a binding site for ATP. In terms of domain architecture, UvrD-like helicase C-terminal spans 279 to 584 (PARFRANPAL…QLALIPPALD (306 aa)). Residues C800, C1119, C1122, and C1128 each contribute to the [4Fe-4S] cluster site.

The protein belongs to the helicase family. AddB/RexB type 1 subfamily. As to quaternary structure, heterodimer of AddA and AddB. It depends on Mg(2+) as a cofactor. [4Fe-4S] cluster is required as a cofactor.

In terms of biological role, the heterodimer acts as both an ATP-dependent DNA helicase and an ATP-dependent, dual-direction single-stranded exonuclease. Recognizes the chi site generating a DNA molecule suitable for the initiation of homologous recombination. The AddB subunit has 5' -&gt; 3' nuclease activity but not helicase activity. This Desulforudis audaxviator (strain MP104C) protein is ATP-dependent helicase/deoxyribonuclease subunit B.